The sequence spans 554 residues: Protein NODULATION SIGNALING PATHWAY 1 (554 aa).

The tract at residues 76 to 165 (TTSTTSLEPN…NSNNGNNKDG (90 aa)) is disordered. The segment covering 82 to 91 (LEPNSFNNIP) has biased composition (polar residues). A compositionally biased stretch (basic and acidic residues) spans 95-107 (LPKKRNAEDELSL). Positions 150-162 (AKANGSNSNNGNN) are enriched in low complexity. One can recognise a GRAS domain in the interval 159 to 548 (NGNNKDGRWA…QPVSFCSLWK (390 aa)). Positions 166–227 (RWAEQLLNPC…HHLSSSSSST (62 aa)) are leucine repeat I (LRI). The tract at residues 246-315 (LLKFYEFSPW…GGPPPLVRLT (70 aa)) is VHIID. The VHIID signature appears at 281 to 285 (LHILD). Residues 331 to 373 (TPFSIGPCGDTFSSGLLGYAQSLNVNLQIKKLDNHPLQTLNAK) form a leucine repeat II (LRII) region. The interval 383–468 (LIVCAQFRLH…RDSDERKMME (86 aa)) is PFYRE. An SAW region spans residues 471 to 548 (AAKALTNQRE…QPVSFCSLWK (78 aa)).

This sequence belongs to the GRAS family. Expressed in epidermal and cortical root cells.

It is found in the nucleus. Its function is as follows. Transcriptional regulator essential for Nod-factor-induced gene expression. Acts downstream of calcium spiking. May be a target of DMI3, a calcium/calmodulin-dependent protein kinase (CCaMK). Is essential for Nod factor-elicited expression of ERN1. Transcription factor involved in the control of strigolactone biosynthesis in roots through the activation of the beta-carotene isomerase D27, which participates in a pathway leading to biosynthesis of strigolactones. The chain is Protein NODULATION SIGNALING PATHWAY 1 from Medicago truncatula (Barrel medic).